The following is an 875-amino-acid chain: Metal transporter CNNM2 (875 aa).

Residues 1-250 (MIGCGACEPE…TKMIVGEEKK (250 aa)) lie on the Extracellular side of the membrane. An N-linked (GlcNAc...) asparagine glycan is attached at N112. The disordered stretch occupies residues 121–149 (TEHERRRHTPSERGLGGPAPPEPDSGPQR). The chain crosses the membrane as a helical span at residues 251–271 (FLLPFWLQVIFISLLLCLSGM). The CNNM transmembrane domain occupies 251-431 (FLLPFWLQVI…DPYNDLVKEE (181 aa)). Residues 272-313 (FSGLNLGLMALDPMELRIVQNCGTEKEKNYAKRIEPVRRQGN) lie on the Cytoplasmic side of the membrane. Positions 314–334 (YLLCSLLLGNVLVNTTLTILL) form an intramembrane region, helical. Residues 335–338 (DDIA) are Cytoplasmic-facing. Residues 339-359 (GSGLVAVVVSTIGIVIFGEIV) traverse the membrane as a helical segment. The Extracellular segment spans residues 360–368 (PQAICSRHG). A helical membrane pass occupies residues 369–389 (LAVGANTIFLTKFFMMMTFPA). Over 390-875 (SYPVSKLLDC…NHSLHSEGAI (486 aa)) the chain is Cytoplasmic. CBS domains follow at residues 450–511 (MTPL…CTPL) and 518–584 (YNHP…ILDE). The disordered stretch occupies residues 741 to 763 (AGSPGENKSPPRPCGLNHSDSLS). A Phosphoserine modification is found at S761.

Belongs to the ACDP family. In terms of assembly, isoform 1 and isoform 2 may interact with each other. In terms of processing, the N-terminus is cleaved within the endoplasmic reticulum. The signal peptidase complex seems to be involved in the processing, but the exact cleavage site has not been identified. Widely expressed, with highest levels in kidney, lung, spleen and testis. In the kidney, predominantly expressed in the distal convoluted tubule and, at lower levels, in the connecting tubule (at protein level).

The protein resides in the cell membrane. Its function is as follows. Divalent metal cation transporter. Mediates transport of divalent metal cations in an order of Mg(2+) &gt; Co(2+) &gt; Mn(2+) &gt; Sr(2+) &gt; Ba(2+) &gt; Cu(2+) &gt; Fe(2+). The sequence is that of Metal transporter CNNM2 (Cnnm2) from Mus musculus (Mouse).